The following is a 382-amino-acid chain: Dihydroflavonol 4-reductase (382 aa).

NADP(+) contacts are provided by Lys-44 and Tyr-163.

The protein belongs to the NAD(P)-dependent epimerase/dehydratase family. Dihydroflavonol-4-reductase subfamily.

It catalyses the reaction a (2R,3S,4S)-leucoanthocyanidin + NADP(+) = a (2R,3R)-dihydroflavonol + NADPH + H(+). The enzyme catalyses (2S)-flavan-4-ol + NADP(+) = (2S)-flavanone + NADPH + H(+). It participates in pigment biosynthesis; anthocyanin biosynthesis. Its function is as follows. Bifunctional enzyme involved in flavonoid metabolism. The protein is Dihydroflavonol 4-reductase (DFRA) of Arabidopsis thaliana (Mouse-ear cress).